A 436-amino-acid polypeptide reads, in one-letter code: Trigger factor (436 aa).

Positions 163–248 constitute a PPIase FKBP-type domain; that stretch reads GDRVTVDFEG…VKKIEAAHLP (86 aa).

The protein belongs to the FKBP-type PPIase family. Tig subfamily.

Its subcellular location is the cytoplasm. The enzyme catalyses [protein]-peptidylproline (omega=180) = [protein]-peptidylproline (omega=0). Its function is as follows. Involved in protein export. Acts as a chaperone by maintaining the newly synthesized protein in an open conformation. Functions as a peptidyl-prolyl cis-trans isomerase. The polypeptide is Trigger factor (Acidovorax ebreus (strain TPSY) (Diaphorobacter sp. (strain TPSY))).